We begin with the raw amino-acid sequence, 586 residues long: RNA-directed RNA polymerase subunit beta (586 aa).

Residues 259-391 (VRAYSGSCSN…TNEKKTFFDG (133 aa)) enclose the RdRp catalytic domain. The Mg(2+) site is built by aspartate 274, aspartate 359, and aspartate 360.

In terms of assembly, homodimer; the replicase complex can dimerize. Part of the viral RNA-dependent RNA polymerase complex, the other subunits are the host ribosomal protein S1, EF-Tu and EF-Ts. S1 is needed for the initiation of genomic RNA (+)-strand replication. Mg(2+) is required as a cofactor.

It carries out the reaction RNA(n) + a ribonucleoside 5'-triphosphate = RNA(n+1) + diphosphate. This is the catalytic subunit of the viral RNA-dependent RNA polymerase complex. This complex is involved in viral RNA replication that produces (+)-stranded genomes via a complementary, (-)-stranded intermediate. Binds RNA cooperatively with the host ribosomal protein S1. The protein is RNA-directed RNA polymerase subunit beta of Escherichia coli.